The chain runs to 207 residues: Protein DMP1 (207 aa).

Positions 1 to 20 (MSETSLLIPKTNSPASSENM) are disordered. The next 4 membrane-spanning stretches (helical) occupy residues 33 to 53 (LIKLLPTGTLFIYLLLNPVLT), 64 to 84 (VMSSILVALCSFSCVFSCFTD), 121 to 141 (IADFVHAGFVLAVFGTLVLLD), and 159 to 179 (LVMALPPAVGVASATIFALFP).

The protein belongs to the plant DMP1 protein family. As to expression, expressed in leaves, siliques and roots.

Its subcellular location is the endoplasmic reticulum membrane. It is found in the vacuole membrane. Involved in membrane remodeling including fission during breakdown of the endoplasmic reticulum (ER) and the tonoplast during leaf senescence and in membrane fusion during vacuole biogenesis in roots. In Arabidopsis thaliana (Mouse-ear cress), this protein is Protein DMP1.